The chain runs to 180 residues: Cytochrome c oxidase assembly protein CtaG (180 aa).

The Cytoplasmic segment spans residues methionine 1–serine 8. A helical; Signal-anchor for type II membrane protein membrane pass occupies residues leucine 9–proline 29. The Periplasmic segment spans residues leucine 30–lysine 180.

Belongs to the COX11/CtaG family.

The protein resides in the cell inner membrane. In terms of biological role, exerts its effect at some terminal stage of cytochrome c oxidase synthesis, probably by being involved in the insertion of the copper B into subunit I. This chain is Cytochrome c oxidase assembly protein CtaG, found in Rickettsia bellii (strain RML369-C).